We begin with the raw amino-acid sequence, 397 residues long: MSWLFPLAKSASSSAAGSPAGLTSLQQQKQRLIESLRNSHSSIAEIQKDVEYRLPFTVNNLTININILLPPQFPQEKPVISVYPPIRHHLMDSQGLYVTSPLVSNFTMHSDLGKIIQSLLDEFWKNPPVLAPTSTTFPYLYSNPGGMPPYPSQGFPFLPPYPPPEANRNITSLSVADTVSSSTTSYTAAKPVAPSFGILSSLPLPVPTTESSASVNQNGFGYKMPDIPDAFPELSELSVSQLTDMNEQEEVLLEQFLMLPQLKQIITDKEDLVKNIEELARKNLLLEHSLEGKRQTVLDKYELLLQMKSTFEKKMQRQHELSESCSASALQARLKVAAHEAEEESDNIAEDFLEGKTEIDDFLNSFKEKRTICHCRRAKEEKLHQVIAMHSQFHAPL.

Ser-18 is modified (phosphoserine). One can recognise a VPS37 C-terminal domain in the interval 308–397; the sequence is KSTFEKKMQR…AMHSQFHAPL (90 aa).

Belongs to the VPS37 family. In terms of assembly, component of the ESCRT-I complex (endosomal sorting complex required for transport I) which consists of TSG101, VPS28, a VPS37 protein (VPS37A to -D) and MVB12A or MVB12B in a 1:1:1:1 stoichiometry. Interacts with TSG101, VPS28 and HGS. Component of an ESCRT-I complex (endosomal sorting complex required for transport I) which consists of TSG101, VPS28, VPS37A and UBAP1 in a 1:1:1:1 stoichiometry.

The protein resides in the late endosome membrane. It localises to the nucleus. Functionally, component of the ESCRT-I complex, a regulator of vesicular trafficking process. Required for the sorting of endocytic ubiquitinated cargos into multivesicular bodies. May be involved in cell growth and differentiation. The protein is Vacuolar protein sorting-associated protein 37A (Vps37a) of Mus musculus (Mouse).